Here is a 206-residue protein sequence, read N- to C-terminus: Translation initiation factor IF-3 (206 aa).

This sequence belongs to the IF-3 family. As to quaternary structure, monomer.

It localises to the cytoplasm. IF-3 binds to the 30S ribosomal subunit and shifts the equilibrium between 70S ribosomes and their 50S and 30S subunits in favor of the free subunits, thus enhancing the availability of 30S subunits on which protein synthesis initiation begins. This chain is Translation initiation factor IF-3, found in Chlorobium luteolum (strain DSM 273 / BCRC 81028 / 2530) (Pelodictyon luteolum).